Here is a 56-residue protein sequence, read N- to C-terminus: Large ribosomal subunit protein bL33 (56 aa).

It belongs to the bacterial ribosomal protein bL33 family.

The sequence is that of Large ribosomal subunit protein bL33 from Halorhodospira halophila (strain DSM 244 / SL1) (Ectothiorhodospira halophila (strain DSM 244 / SL1)).